A 370-amino-acid chain; its full sequence is tRNA (guanine(9)-/adenine(9)-N1)-methyltransferase (370 aa).

The 206-residue stretch at T87–Y292 folds into the SAM-dependent MTase TRM10-type domain.

It belongs to the class IV-like SAM-binding methyltransferase superfamily. TRM10 family.

It localises to the cytoplasm. It carries out the reaction adenosine(9) in tRNA + S-adenosyl-L-methionine = N(1)-methyladenosine(9) in tRNA + S-adenosyl-L-homocysteine + H(+). The enzyme catalyses guanosine(9) in tRNA + S-adenosyl-L-methionine = N(1)-methylguanosine(9) in tRNA + S-adenosyl-L-homocysteine + H(+). Its function is as follows. Catalyzes the S-adenosyl-L-methionine-dependent formation of either N(1)-methyladenine or N(1)-methylguanine at position 9 (m1A9 or m1G9) in tRNA. The chain is tRNA (guanine(9)-/adenine(9)-N1)-methyltransferase from Thermococcus kodakarensis (strain ATCC BAA-918 / JCM 12380 / KOD1) (Pyrococcus kodakaraensis (strain KOD1)).